The primary structure comprises 565 residues: NAD-dependent malic enzyme (565 aa).

Tyr103 serves as the catalytic Proton donor. The active-site Proton acceptor is Lys177. Residues Glu248, Asp249, and Asp272 each contribute to the a divalent metal cation site. NAD(+)-binding residues include Asp272 and Asn419. Phosphoserine is present on Ser445.

It belongs to the malic enzymes family. It depends on Mg(2+) as a cofactor. Requires Mn(2+) as cofactor.

The enzyme catalyses (S)-malate + NAD(+) = pyruvate + CO2 + NADH. The catalysed reaction is oxaloacetate + H(+) = pyruvate + CO2. The protein is NAD-dependent malic enzyme (mae2) of Schizosaccharomyces pombe (strain 972 / ATCC 24843) (Fission yeast).